A 623-amino-acid chain; its full sequence is Chaperone protein DnaK (623 aa).

Phosphothreonine; by autocatalysis is present on Thr174. Disordered stretches follow at residues 470–504 (ITIK…KEEV) and 578–623 (GGAQ…DPDK). Basic and acidic residues predominate over residues 481 to 504 (EEIKKMQKDAEEHAEEDKKRKEEV). Residues 578–604 (GGAQGAAGQAGPQGAQGGQPNNDNGSS) are compositionally biased toward low complexity. Positions 614 to 623 (GDFHKVDPDK) are enriched in basic and acidic residues.

The protein belongs to the heat shock protein 70 family.

Functionally, acts as a chaperone. The chain is Chaperone protein DnaK from Lactobacillus gasseri (strain ATCC 33323 / DSM 20243 / BCRC 14619 / CIP 102991 / JCM 1131 / KCTC 3163 / NCIMB 11718 / NCTC 13722 / AM63).